A 570-amino-acid polypeptide reads, in one-letter code: AT-rich interactive domain-containing protein 3A (570 aa).

Residues 102 to 215 are disordered; the sequence is AGVPNSSSGH…LAPQAQSQHH (114 aa). Residues 120–160 show a composition bias toward acidic residues; the sequence is DIDDEDDEDDDPELDRGMDDEERDMDEDDSMNEGGGDEDLE. Ser-179 is subject to Phosphoserine. One can recognise an ARID domain in the interval 232 to 324; that stretch reads DEKRKEFLDD…YLYPYECEKR (93 aa). Ser-356 carries the post-translational modification Phosphoserine. The region spanning 429–523 is the REKLES domain; it reads AALEQLREKL…GVLFARKPAI (95 aa). The interval 430–473 is important for nuclear localization; that stretch reads ALEQLREKLESGEPPEKKVMLMAEEQQRIMQHALQQNLFAMATQ. The segment at 475 to 495 is homodimerization; the sequence is PMNIKLNNRDDRQETALNLST. Residues 519–531 are important for cytoplasmic localization; the sequence is RKPAIGFMPSSQR. Residues 528–570 are disordered; the sequence is SSQRVHHQHSSQGKSNSPGLSSHIQPSSSASSSASSHGPATSP. 2 positions are modified to phosphoserine: Ser-542 and Ser-569. Low complexity predominate over residues 548–570; that stretch reads SSHIQPSSSASSSASSHGPATSP.

In terms of assembly, homodimer.

It is found in the nucleus. It localises to the cytoplasm. Functionally, transcription factor. This is AT-rich interactive domain-containing protein 3A (arid3a) from Danio rerio (Zebrafish).